The sequence spans 405 residues: uncharacterized protein (405 aa).

The first 20 residues, 1–20 (MKAKLALSIIGLVLASLVAG), serve as a signal peptide directing secretion. At cysteine 21 the chain carries N-acetylcysteine. The S-archaeol cysteine moiety is linked to residue cysteine 21.

Belongs to the BMP lipoprotein family.

The protein resides in the cell membrane. This is an uncharacterized protein from Pyrococcus horikoshii (strain ATCC 700860 / DSM 12428 / JCM 9974 / NBRC 100139 / OT-3).